We begin with the raw amino-acid sequence, 563 residues long: Grainyhead-like protein 1 homolog (563 aa).

One can recognise a Grh/CP2 DB domain in the interval N194 to I428. Interaction with DNA regions lie at residues T326–K335 and R372–R375. The tract at residues E377–Y405 is disordered.

This sequence belongs to the grh/CP2 family. Grainyhead subfamily.

It is found in the nucleus. In terms of biological role, probable transcription factor. Binds a motif with the core sequence 5'-C[ACT][TG]G-3' in regulatory elements of target genes. Many putative target genes show oscillating expression levels, perhaps as a result of rhythmic variation in accumulation of grh-1. Plays a role in proper cuticle formation and/or barrier function and is required repetitively during development, for successful completion of each molt. Involved in modulating lifespan. Plays a role in defense response to bacteria. May act upstream of the p38 MAP kinase / pmk-1 pathway. May act downstream of the insulin/IGF-1 receptor signaling (IIS) pathway. The sequence is that of Grainyhead-like protein 1 homolog from Caenorhabditis elegans.